A 192-amino-acid chain; its full sequence is Probable cobalt-precorrin-6B C(15)-methyltransferase (decarboxylating) (192 aa).

S-adenosyl-L-methionine-binding positions include Thr20, 44–48 (GSGTG), Glu68, and Ala96.

It belongs to the methyltransferase superfamily. Archaeal-type CbiT family.

The enzyme catalyses Co-precorrin-6B + S-adenosyl-L-methionine = Co-precorrin-7 + S-adenosyl-L-homocysteine + CO2. Its pathway is cofactor biosynthesis; adenosylcobalamin biosynthesis; cob(II)yrinate a,c-diamide from sirohydrochlorin (anaerobic route): step 8/10. In terms of biological role, catalyzes the methylation of C-15 in cobalt-precorrin-6B followed by the decarboxylation of C-12 to form cobalt-precorrin-7. The protein is Probable cobalt-precorrin-6B C(15)-methyltransferase (decarboxylating) of Sulfolobus acidocaldarius (strain ATCC 33909 / DSM 639 / JCM 8929 / NBRC 15157 / NCIMB 11770).